Here is a 199-residue protein sequence, read N- to C-terminus: Desiccation stress protein DSP-22, chloroplastic (199 aa).

Residues 1–52 constitute a chloroplast transit peptide; sequence MASSTCYATIPAMSCRGQSTITRFGPNNLFLGKQSYELPLMRRNAKFTVRSM. Residues 53-62 show a composition bias toward basic and acidic residues; it reads REDNEKEEQQ. The interval 53–82 is disordered; that stretch reads REDNEKEEQQQQKQQQTHDGGPDLTPNRTE. 2 helical membrane passes run 130–152 and 172–191; these read FNGGVMWFLLTSAVLVLATLIPI and IWNGRFAMIGLVALAFTEYV.

Belongs to the ELIP/psbS family. As to expression, preferentially localized in the chloroplast-rich palisade parenchyma cells, in extracts of desiccated leaves, in seeds, but not in roots or untreated leaves.

The protein resides in the plastid. Its subcellular location is the chloroplast thylakoid membrane. Its function is as follows. Possibly exerts a protective role during water loss. This is Desiccation stress protein DSP-22, chloroplastic (DSP-22) from Craterostigma plantagineum (Blue gem).